Reading from the N-terminus, the 146-residue chain is Ribosome maturation factor RimP (146 aa).

The protein belongs to the RimP family.

It is found in the cytoplasm. Functionally, required for maturation of 30S ribosomal subunits. This is Ribosome maturation factor RimP from Dechloromonas aromatica (strain RCB).